A 474-amino-acid polypeptide reads, in one-letter code: Lysosomal protective protein (474 aa).

Positions 1-23 (MPGTALSPLLLLLLLSWASRNEA) are cleaved as a signal peptide. 4 cysteine pairs are disulfide-bonded: cysteine 83/cysteine 356, cysteine 235/cysteine 251, cysteine 236/cysteine 241, and cysteine 276/cysteine 325. Asparagine 140 carries an N-linked (GlcNAc...) (high mannose) asparagine glycan. Serine 173 is an active-site residue. Asparagine 327 is a glycosylation site (N-linked (GlcNAc...) (high mannose) asparagine). Residues aspartate 394 and histidine 451 contribute to the active site.

It belongs to the peptidase S10 family. As to quaternary structure, heterodimer of a 32 kDa chain and a 20 kDa chain; disulfide-linked.

The protein localises to the lysosome. It carries out the reaction Release of a C-terminal amino acid with broad specificity.. Its function is as follows. Protective protein appears to be essential for both the activity of beta-galactosidase and neuraminidase, it associates with these enzymes and exerts a protective function necessary for their stability and activity. This protein is also a carboxypeptidase and can deamidate tachykinins. The polypeptide is Lysosomal protective protein (Ctsa) (Mus musculus (Mouse)).